We begin with the raw amino-acid sequence, 439 residues long: IAA-amino acid hydrolase ILR1-like 2 (439 aa).

The first 21 residues, 1-21, serve as a signal peptide directing secretion; it reads MALNKLLSLTFQLLLFLLSVS. Positions 137, 139, 173, 197, and 397 each coordinate Mn(2+). The Prevents secretion from ER motif lies at 436–439; sequence HEEL.

The protein belongs to the peptidase M20 family. In terms of assembly, monomer. It depends on Mn(2+) as a cofactor. In terms of tissue distribution, expressed in leaves, stems, siliques, seeds and flowers. Detected in the distal tips of cotyledons and seedling leaves, hydathodes of leaves from mature plants, pollen, ovules and developing seeds.

The protein resides in the endoplasmic reticulum lumen. In terms of biological role, hydrolyzes certain amino acid conjugates of the plant growth regulator indole-3-acetic acid (IAA), including IAA-Ala, IAA-Leu, IAA-Met, IAA-Phe, IAA-Ser, IAA-Thr, IAA-Tyr and IAA-Val. Is the most efficient enzyme of the ILL family for IAA-Ala. Not important for IAA-Leu hydrolysis in roots. May act with ILR1 to provide free IAA to germinating seedlings. The chain is IAA-amino acid hydrolase ILR1-like 2 from Arabidopsis thaliana (Mouse-ear cress).